The primary structure comprises 824 residues: Glycogen phosphorylase (824 aa).

An N6-(pyridoxal phosphate)lysine modification is found at K667.

It belongs to the glycogen phosphorylase family. It depends on pyridoxal 5'-phosphate as a cofactor.

It catalyses the reaction [(1-&gt;4)-alpha-D-glucosyl](n) + phosphate = [(1-&gt;4)-alpha-D-glucosyl](n-1) + alpha-D-glucose 1-phosphate. Its function is as follows. Phosphorylase is an important allosteric enzyme in carbohydrate metabolism. Enzymes from different sources differ in their regulatory mechanisms and in their natural substrates. However, all known phosphorylases share catalytic and structural properties. The chain is Glycogen phosphorylase (glgP) from Chlamydia pneumoniae (Chlamydophila pneumoniae).